Consider the following 212-residue polypeptide: MKGGRDLKAARGGADRPLAPAYAPCRPGRLQRHLLSGEFDQLRDFPIFESNFVQVTRFGEVANKVTMGVAASSPALELPDLLLLAGPDKENGHLQLLGLFPLQFVQLFVHDESRQQLKVKFRTGRAFYLQLRSPPETRDCEFGRWVRLLYRLRFHSPTCAVPFTHEDTAPEEEEEEEEEEEEEEVKEGQLQPPEFQATEARLDPQVSELWGL.

Disordered regions lie at residues 1–21 (MKGG…LAPA) and 162–212 (PFTH…LWGL). A compositionally biased stretch (acidic residues) spans 169–185 (APEEEEEEEEEEEEEEV).

The protein belongs to the GARIN family. Interacts (via N-terminus) with RAB2B (in GTP-bound form). Expressed in testis (at protein level).

The protein localises to the golgi apparatus. Functionally, RAB2B effector protein which promotes cytosolic DNA-induced innate immune responses. Regulates IFN responses against DNA viruses by regulating the CGAS-STING signaling axis. In Mus musculus (Mouse), this protein is Golgi-associated RAB2 interactor protein 5A.